The sequence spans 170 residues: Zinc finger matrin-type protein 5 (170 aa).

A C3H1-type zinc finger spans residues 51-79 (EQNKRPCRKFLLTGQCDFGSNCRFSHMSE). Residues 150–170 (PPSLRAPPPGGWPLQPSVQWG) form a disordered region.

In terms of assembly, component of the U11/U12 snRNPs that are part of the U12-type spliceosome.

The protein localises to the nucleus. This is Zinc finger matrin-type protein 5 (ZMAT5) from Bos taurus (Bovine).